Consider the following 185-residue polypeptide: Ribosome-recycling factor (185 aa).

It belongs to the RRF family.

The protein resides in the cytoplasm. Its function is as follows. Responsible for the release of ribosomes from messenger RNA at the termination of protein biosynthesis. May increase the efficiency of translation by recycling ribosomes from one round of translation to another. This Campylobacter concisus (strain 13826) protein is Ribosome-recycling factor.